A 173-amino-acid chain; its full sequence is Avenin-like a5 (173 aa).

The N-terminal stretch at 1 to 19 is a signal peptide; it reads MKTMLILALIALAATSVVA.

This sequence belongs to the prolamin family. In terms of processing, contains 7 disulfide bonds.

Functionally, seed storage protein. Not integrated in the gluten polymer through disulfide bonds, unless incorporated by reduction and reoxidation during dough making. Increases dough strength and bread volume, but decreases dough stability when added into a base wheat flour. This chain is Avenin-like a5, found in Triticum aestivum (Wheat).